The chain runs to 280 residues: 2-dehydro-3-deoxyphosphooctonate aldolase (280 aa).

The protein belongs to the KdsA family.

The protein resides in the cytoplasm. It catalyses the reaction D-arabinose 5-phosphate + phosphoenolpyruvate + H2O = 3-deoxy-alpha-D-manno-2-octulosonate-8-phosphate + phosphate. Its pathway is carbohydrate biosynthesis; 3-deoxy-D-manno-octulosonate biosynthesis; 3-deoxy-D-manno-octulosonate from D-ribulose 5-phosphate: step 2/3. It functions in the pathway bacterial outer membrane biogenesis; lipopolysaccharide biosynthesis. In Neisseria gonorrhoeae (strain NCCP11945), this protein is 2-dehydro-3-deoxyphosphooctonate aldolase.